A 153-amino-acid polypeptide reads, in one-letter code: SsrA-binding protein (153 aa).

It belongs to the SmpB family.

The protein resides in the cytoplasm. Its function is as follows. Required for rescue of stalled ribosomes mediated by trans-translation. Binds to transfer-messenger RNA (tmRNA), required for stable association of tmRNA with ribosomes. tmRNA and SmpB together mimic tRNA shape, replacing the anticodon stem-loop with SmpB. tmRNA is encoded by the ssrA gene; the 2 termini fold to resemble tRNA(Ala) and it encodes a 'tag peptide', a short internal open reading frame. During trans-translation Ala-aminoacylated tmRNA acts like a tRNA, entering the A-site of stalled ribosomes, displacing the stalled mRNA. The ribosome then switches to translate the ORF on the tmRNA; the nascent peptide is terminated with the 'tag peptide' encoded by the tmRNA and targeted for degradation. The ribosome is freed to recommence translation, which seems to be the essential function of trans-translation. The chain is SsrA-binding protein from Macrococcus caseolyticus (strain JCSC5402) (Macrococcoides caseolyticum).